We begin with the raw amino-acid sequence, 118 residues long: Large ribosomal subunit protein bL20 (118 aa).

This sequence belongs to the bacterial ribosomal protein bL20 family.

In terms of biological role, binds directly to 23S ribosomal RNA and is necessary for the in vitro assembly process of the 50S ribosomal subunit. It is not involved in the protein synthesizing functions of that subunit. In Francisella tularensis subsp. novicida (strain U112), this protein is Large ribosomal subunit protein bL20.